The following is a 1104-amino-acid chain: Translation initiation factor IF-2 (1104 aa).

Disordered regions lie at residues 51-444 and 461-497; these read SLLG…LAAQ and LARPAKPKSQQRTAPKPVAAMRKRKKETARQRQRRRA. Composition is skewed to low complexity over residues 60 to 119 and 127 to 164; these read AKPA…KPQA and ATPKPVISKPAPALVKAAAAPARPTAAKPVPRPAAAKP. Pro residues predominate over residues 189 to 202; sequence APTPRPTPARPTPR. 4 stretches are compositionally biased toward low complexity: residues 203 to 215, 227 to 246, 311 to 336, and 366 to 396; these read PAGAGSPARPTPG, GAPSRPGAPTRAGAPAKPGA, STTGSGRPGAPTRPGAPGRPGMPAGM, and PTKAGAGAGTATPPVARPNSPSAPRRPSFRP. Basic and acidic residues predominate over residues 406–420; sequence GRPDWDDSARLDALR. Positions 481-495 are enriched in basic residues; sequence MRKRKKETARQRQRR. The tr-type G domain maps to 596 to 768; the sequence is RRPPVVTVMG…LLLVTEVEDL (173 aa). The tract at residues 605–612 is G1; that stretch reads GHVDHGKT. GTP is bound at residue 605 to 612; it reads GHVDHGKT. A G2 region spans residues 630–634; the sequence is GITQH. Positions 655–658 are G3; sequence DTPG. GTP contacts are provided by residues 655-659 and 709-712; these read DTPGH and NKID. A G4 region spans residues 709 to 712; it reads NKID. A G5 region spans residues 745-747; it reads SAI.

It belongs to the TRAFAC class translation factor GTPase superfamily. Classic translation factor GTPase family. IF-2 subfamily.

The protein localises to the cytoplasm. One of the essential components for the initiation of protein synthesis. Protects formylmethionyl-tRNA from spontaneous hydrolysis and promotes its binding to the 30S ribosomal subunits. Also involved in the hydrolysis of GTP during the formation of the 70S ribosomal complex. The sequence is that of Translation initiation factor IF-2 from Synechococcus sp. (strain CC9605).